The chain runs to 200 residues: 3-isopropylmalate dehydratase small subunit (200 aa).

It belongs to the LeuD family. LeuD type 1 subfamily. In terms of assembly, heterodimer of LeuC and LeuD.

It carries out the reaction (2R,3S)-3-isopropylmalate = (2S)-2-isopropylmalate. It functions in the pathway amino-acid biosynthesis; L-leucine biosynthesis; L-leucine from 3-methyl-2-oxobutanoate: step 2/4. In terms of biological role, catalyzes the isomerization between 2-isopropylmalate and 3-isopropylmalate, via the formation of 2-isopropylmaleate. This is 3-isopropylmalate dehydratase small subunit from Campylobacter jejuni subsp. jejuni serotype O:23/36 (strain 81-176).